The sequence spans 463 residues: Glutamate--tRNA ligase 1 (463 aa).

The 'HIGH' region motif lies at 10-20 (PSPTGYLHIGG). The short motif at 238-242 (KLSKR) is the 'KMSKS' region element. Lys241 contacts ATP.

The protein belongs to the class-I aminoacyl-tRNA synthetase family. Glutamate--tRNA ligase type 1 subfamily. Monomer.

The protein localises to the cytoplasm. The enzyme catalyses tRNA(Glu) + L-glutamate + ATP = L-glutamyl-tRNA(Glu) + AMP + diphosphate. In terms of biological role, catalyzes the attachment of glutamate to tRNA(Glu) in a two-step reaction: glutamate is first activated by ATP to form Glu-AMP and then transferred to the acceptor end of tRNA(Glu). In Helicobacter pylori (strain P12), this protein is Glutamate--tRNA ligase 1.